Here is a 194-residue protein sequence, read N- to C-terminus: Peptidyl-tRNA hydrolase (194 aa).

Position 17 (Tyr17) interacts with tRNA. The active-site Proton acceptor is His22. Phe68, Asn70, and Asn116 together coordinate tRNA.

It belongs to the PTH family. Monomer.

It is found in the cytoplasm. The catalysed reaction is an N-acyl-L-alpha-aminoacyl-tRNA + H2O = an N-acyl-L-amino acid + a tRNA + H(+). In terms of biological role, hydrolyzes ribosome-free peptidyl-tRNAs (with 1 or more amino acids incorporated), which drop off the ribosome during protein synthesis, or as a result of ribosome stalling. Catalyzes the release of premature peptidyl moieties from peptidyl-tRNA molecules trapped in stalled 50S ribosomal subunits, and thus maintains levels of free tRNAs and 50S ribosomes. This is Peptidyl-tRNA hydrolase from Actinobacillus pleuropneumoniae serotype 5b (strain L20).